The chain runs to 466 residues: 23S rRNA (uracil(1939)-C(5))-methyltransferase RlmD (466 aa).

The segment at 1–22 (MSSQPNPTSHPEAASAASAASN) is disordered. One can recognise a TRAM domain in the interval 17–81 (ASAASNDPVV…PSYEQAHLVE (65 aa)). [4Fe-4S] cluster-binding residues include C94, C100, C103, and C182. Positions 290, 319, 324, 340, 368, and 389 each coordinate S-adenosyl-L-methionine. Residue C422 is the Nucleophile of the active site.

This sequence belongs to the class I-like SAM-binding methyltransferase superfamily. RNA M5U methyltransferase family. RlmD subfamily.

It carries out the reaction uridine(1939) in 23S rRNA + S-adenosyl-L-methionine = 5-methyluridine(1939) in 23S rRNA + S-adenosyl-L-homocysteine + H(+). Its function is as follows. Catalyzes the formation of 5-methyl-uridine at position 1939 (m5U1939) in 23S rRNA. The chain is 23S rRNA (uracil(1939)-C(5))-methyltransferase RlmD from Cupriavidus metallidurans (strain ATCC 43123 / DSM 2839 / NBRC 102507 / CH34) (Ralstonia metallidurans).